The following is a 421-amino-acid chain: Structure-specific endonuclease subunit SLX1 (421 aa).

In terms of domain architecture, GIY-YIG spans 13–95 (AFYCCYLLRS…QHTKESRHAE (83 aa)). Disordered regions lie at residues 34 to 57 (TPEPSRRLAQHNGDRTGGARKTSS) and 96 to 120 (VERCESEQLGTRGSSRTGKEVKRAG). Residues 225-280 (CGVCKQRLNPRNDMIAICSHSLCRCASHLLCLSAHFLEAAGFIGKLIPKEGTCPAC) form an SLX1-type zinc finger. Basic residues predominate over residues 310 to 322 (RRRTEQVGKRKIS). Positions 310 to 339 (RRRTEQVGKRKISNHVSSEKGESEASMPST) are disordered.

The protein belongs to the SLX1 family. Forms a heterodimer with SLX4. Requires a divalent metal cation as cofactor.

Its subcellular location is the nucleus. Functionally, catalytic subunit of the SLX1-SLX4 structure-specific endonuclease that resolves DNA secondary structures generated during DNA repair and recombination. Has endonuclease activity towards branched DNA substrates, introducing single-strand cuts in duplex DNA close to junctions with ss-DNA. This Ajellomyces capsulatus (strain G186AR / H82 / ATCC MYA-2454 / RMSCC 2432) (Darling's disease fungus) protein is Structure-specific endonuclease subunit SLX1.